The chain runs to 579 residues: Deleted in azoospermia protein 4 (579 aa).

Positions 1 to 10 (MSAANPETPN) are enriched in polar residues. Residues 1–27 (MSAANPETPNSTISREASTQSSSAAAS) are disordered. The span at 11–27 (STISREASTQSSSAAAS) shows a compositional bias: low complexity. Residues 40–115 (NTVFVGGIDA…KKLKLGPAIR (76 aa)) form the RRM 1 domain. Over residues 163 to 175 (QHVQSAANPETPN) the composition is skewed to polar residues. A disordered region spans residues 163 to 192 (QHVQSAANPETPNSTISREASTQSSSAAAS). Low complexity predominate over residues 176-192 (STISREASTQSSSAAAS). The 76-residue stretch at 205–280 (NTVFVGGIDA…KKLKLGPAIR (76 aa)) folds into the RRM 2 domain. DAZ domains follow at residues 332–355 (AYSA…YNYQ), 356–379 (EYPT…YNYQ), 380–403 (PFPA…YNYQ), 404–427 (AFPA…YNYQ), 428–451 (PFPA…YNYQ), 452–475 (AFPA…YNYQ), 476–499 (AFPA…YNYQ), 500–523 (AFPA…YNYQ), and 524–547 (AFPA…YNYQ).

The protein belongs to the RRM DAZ family. Forms a heterodimer with BOLL and DAZL. Interacts with PUM2, DAZAP1, DAZAP2, DZIP1 and DZIP3. Testis-specific. Expression restricted to premeiotic germ cells, particularly in spermatogonia (at protein level).

Its subcellular location is the cytoplasm. The protein localises to the nucleus. In terms of biological role, RNA-binding protein that plays an essential role in spermatogenesis. May act by binding to the 3'-UTR of mRNAs and regulating their translation. This Homo sapiens (Human) protein is Deleted in azoospermia protein 4 (DAZ4).